Reading from the N-terminus, the 435-residue chain is Putrescine transporter PotE (435 aa).

Transmembrane regions (helical) follow at residues 8 to 28 (IGVV…GIIM), 39 to 59 (ISIV…YAFA), 95 to 115 (LVIA…ELFG), 117 to 137 (ILSP…ATVL), 148 to 168 (ISSF…IIGW), 185 to 205 (VPTF…FLGL), 224 to 244 (IAVL…TNVI), 275 to 295 (VIMG…QFTI), 320 to 340 (APVV…LMTI), 354 to 374 (LAVV…AVLL), 386 to 406 (TTVF…YAAG), and 409 to 429 (AMLY…FVSY).

It belongs to the amino acid-polyamine-organocation (APC) superfamily. Basic amino acid/polyamine antiporter (APA) (TC 2.A.3.2) family.

It localises to the cell inner membrane. It catalyses the reaction putrescine(in) + H(+)(in) = putrescine(out) + H(+)(out). It carries out the reaction putrescine(in) + L-ornithine(out) = putrescine(out) + L-ornithine(in). Functionally, catalyzes both the uptake and excretion of putrescine. The uptake of putrescine is dependent on the membrane potential and the excretion involves putrescine-ornithine antiporter activity. The polypeptide is Putrescine transporter PotE (Haemophilus influenzae (strain ATCC 51907 / DSM 11121 / KW20 / Rd)).